Consider the following 144-residue polypeptide: Large ribosomal subunit protein uL15 (144 aa).

Residues 1–52 (MRLNSLSPAEGAKHSAKRLGRGIGSGLGKTGGRGHKGQKSRTGGGVRRGFEG) form a disordered region. A compositionally biased stretch (gly residues) spans 21-31 (RGIGSGLGKTG).

This sequence belongs to the universal ribosomal protein uL15 family. As to quaternary structure, part of the 50S ribosomal subunit.

Binds to the 23S rRNA. The sequence is that of Large ribosomal subunit protein uL15 from Haemophilus ducreyi (strain 35000HP / ATCC 700724).